Reading from the N-terminus, the 619-residue chain is Dihydroxy-acid dehydratase (619 aa).

Asp81 contacts Mg(2+). Cys122 contributes to the [2Fe-2S] cluster binding site. Mg(2+) contacts are provided by Asp123 and Lys124. At Lys124 the chain carries N6-carboxylysine. Cys195 is a binding site for [2Fe-2S] cluster. Position 494 (Glu494) interacts with Mg(2+). Ser520 (proton acceptor) is an active-site residue.

This sequence belongs to the IlvD/Edd family. Homodimer. The cofactor is [2Fe-2S] cluster. Requires Mg(2+) as cofactor.

The enzyme catalyses (2R)-2,3-dihydroxy-3-methylbutanoate = 3-methyl-2-oxobutanoate + H2O. It catalyses the reaction (2R,3R)-2,3-dihydroxy-3-methylpentanoate = (S)-3-methyl-2-oxopentanoate + H2O. The protein operates within amino-acid biosynthesis; L-isoleucine biosynthesis; L-isoleucine from 2-oxobutanoate: step 3/4. It functions in the pathway amino-acid biosynthesis; L-valine biosynthesis; L-valine from pyruvate: step 3/4. Functionally, functions in the biosynthesis of branched-chain amino acids. Catalyzes the dehydration of (2R,3R)-2,3-dihydroxy-3-methylpentanoate (2,3-dihydroxy-3-methylvalerate) into 2-oxo-3-methylpentanoate (2-oxo-3-methylvalerate) and of (2R)-2,3-dihydroxy-3-methylbutanoate (2,3-dihydroxyisovalerate) into 2-oxo-3-methylbutanoate (2-oxoisovalerate), the penultimate precursor to L-isoleucine and L-valine, respectively. This Shewanella sp. (strain MR-4) protein is Dihydroxy-acid dehydratase.